The sequence spans 264 residues: Thymidylate synthase (264 aa).

Residue arginine 21 coordinates dUMP. Histidine 51 lines the (6R)-5,10-methylene-5,6,7,8-tetrahydrofolate pocket. 126 to 127 (RR) lines the dUMP pocket. Cysteine 146 serves as the catalytic Nucleophile. DUMP is bound by residues 166 to 169 (RSAD), asparagine 177, and 207 to 209 (HLY). Position 169 (aspartate 169) interacts with (6R)-5,10-methylene-5,6,7,8-tetrahydrofolate. Alanine 263 is a binding site for (6R)-5,10-methylene-5,6,7,8-tetrahydrofolate.

It belongs to the thymidylate synthase family. Bacterial-type ThyA subfamily. Homodimer.

It localises to the cytoplasm. It carries out the reaction dUMP + (6R)-5,10-methylene-5,6,7,8-tetrahydrofolate = 7,8-dihydrofolate + dTMP. The protein operates within pyrimidine metabolism; dTTP biosynthesis. Its function is as follows. Catalyzes the reductive methylation of 2'-deoxyuridine-5'-monophosphate (dUMP) to 2'-deoxythymidine-5'-monophosphate (dTMP) while utilizing 5,10-methylenetetrahydrofolate (mTHF) as the methyl donor and reductant in the reaction, yielding dihydrofolate (DHF) as a by-product. This enzymatic reaction provides an intracellular de novo source of dTMP, an essential precursor for DNA biosynthesis. The protein is Thymidylate synthase of Hyphomonas neptunium (strain ATCC 15444).